Consider the following 111-residue polypeptide: Putative pterin-4-alpha-carbinolamine dehydratase (111 aa).

It belongs to the pterin-4-alpha-carbinolamine dehydratase family.

It catalyses the reaction (4aS,6R)-4a-hydroxy-L-erythro-5,6,7,8-tetrahydrobiopterin = (6R)-L-erythro-6,7-dihydrobiopterin + H2O. This Marinobacter nauticus (strain ATCC 700491 / DSM 11845 / VT8) (Marinobacter aquaeolei) protein is Putative pterin-4-alpha-carbinolamine dehydratase.